Reading from the N-terminus, the 396-residue chain is Digeranylgeranylglycerophospholipid reductase (396 aa).

FAD contacts are provided by Gly14, Glu33, Cys44, Gly45, Gly47, Arg100, Ala124, Glu162, Asp283, Gly295, and Ile296. 2 residues coordinate a 2,3-bis-O-(geranylgeranyl)-sn-glycerol 1-phospholipid: Lys338 and Val374.

Belongs to the geranylgeranyl reductase family. DGGGPL reductase subfamily. In terms of assembly, monomer. FAD is required as a cofactor.

It localises to the cell membrane. The catalysed reaction is 2,3-bis-O-(phytanyl)-sn-glycerol 1-phosphate + 8 NADP(+) = 2,3-bis-O-(geranylgeranyl)-sn-glycerol 1-phosphate + 8 NADPH + 8 H(+). It carries out the reaction 2,3-bis-O-(phytanyl)-sn-glycerol 1-phosphate + 8 NAD(+) = 2,3-bis-O-(geranylgeranyl)-sn-glycerol 1-phosphate + 8 NADH + 8 H(+). The enzyme catalyses a 2,3-bis-O-phytanyl-sn-glycerol 1-phospholipid + 8 A = a 2,3-bis-O-(geranylgeranyl)-sn-glycerol 1-phospholipid + 8 AH2. It catalyses the reaction CDP-2,3-bis-O-(geranylgeranyl)-sn-glycerol + 8 AH2 = CDP-2,3-bis-O-(phytanyl)-sn-glycerol + 8 A. The catalysed reaction is archaetidylserine + 8 AH2 = 2,3-bis-O-phytanyl-sn-glycero-3-phospho-L-serine + 8 A. It functions in the pathway membrane lipid metabolism; glycerophospholipid metabolism. In terms of biological role, is involved in the reduction of 2,3-digeranylgeranylglycerophospholipids (unsaturated archaeols) into 2,3-diphytanylglycerophospholipids (saturated archaeols) in the biosynthesis of archaeal membrane lipids. Catalyzes the formation of archaetidic acid (2,3-di-O-phytanyl-sn-glyceryl phosphate) from 2,3-di-O-geranylgeranylglyceryl phosphate (DGGGP) via the hydrogenation of each double bond of the isoprenoid chains. Can use both NADH and NADPH as electron donors. Also catalyzes the reduction of 2,3-di-O-geranylgeranylglyceryl phosphate analogs such as 2,3-di-O-phytyl-sn-glyceryl phosphate (DPHGP), 3-O-(2,3-di-O-phytyl-sn-glycero-phospho)-sn-glycerol (DPHGPG) and 2,3-di-O-phytyl-sn-glycero-phosphoethanolamine (DPHGPE). Is not active toward 2,3-di-O-geranylgeranylglycerol. Is also probably able to reduce double bonds of geranyl groups in CDP-2,3-bis-O-(geranylgeranyl)-sn-glycerol and archaetidylserine, thus acting at various stages in the biosynthesis of archaeal membrane lipids. The polypeptide is Digeranylgeranylglycerophospholipid reductase (Thermoplasma acidophilum (strain ATCC 25905 / DSM 1728 / JCM 9062 / NBRC 15155 / AMRC-C165)).